Consider the following 269-residue polypeptide: Ribonuclease HII (269 aa).

An RNase H type-2 domain is found at 28–222; it reads RHVAGADEAG…VSGRRGAPPR (195 aa). A divalent metal cation-binding residues include Asp-34, Glu-35, and Asp-128.

The protein belongs to the RNase HII family. Requires Mn(2+) as cofactor. Mg(2+) is required as a cofactor.

Its subcellular location is the cytoplasm. It carries out the reaction Endonucleolytic cleavage to 5'-phosphomonoester.. Its function is as follows. Endonuclease that specifically degrades the RNA of RNA-DNA hybrids. The polypeptide is Ribonuclease HII (Salinispora arenicola (strain CNS-205)).